Reading from the N-terminus, the 624-residue chain is Sodium/potassium/calcium exchanger 3 (624 aa).

A signal peptide spans 1-25 (RDLLLSQLCFLASVALLLWSLSSLR). Over 26–88 (EQKELDLMDL…DIFSNEDRRQ (63 aa)) the chain is Extracellular. N-linked (GlcNAc...) asparagine glycosylation is found at Asn52 and Asn67. A helical transmembrane segment spans residues 89–109 (GAVVLHVLCAMYMFYALAIVC). The Cytoplasmic portion of the chain corresponds to 110–133 (DDFFVPSLEKICERLHLSEDVAGA). Residues 130–170 (VAGATFMAAGSSAPELFTSVIGVFITKGDVGVGTIVGSAVF) form an Alpha-1 repeat. Residues 134-154 (TFMAAGSSAPELFTSVIGVFI) form a helical membrane-spanning segment. At 155-163 (TKGDVGVGT) the chain is on the extracellular side. The helical transmembrane segment at 164 to 184 (IVGSAVFNILCIIGVCGLFAG) threads the bilayer. Residues 185-191 (QVVALSS) lie on the Cytoplasmic side of the membrane. Residues 192–212 (WCLLRDSIYYTLSVVALIVFI) form a helical membrane-spanning segment. The Extracellular segment spans residues 213–215 (YDE). Residues 216–236 (KVSWWESLVLVLMYLIYIIIM) form a helical membrane-spanning segment. Topologically, residues 237 to 465 (KYNACIHQCF…WFMVTFASST (229 aa)) are cytoplasmic. Phosphoserine is present on Ser289. A compositionally biased stretch (acidic residues) spans 386-414 (AEADNETENENEDENNENDEEEDEDDDEG). The disordered stretch occupies residues 386–421 (AEADNETENENEDENNENDEEEDEDDDEGPYTPFDP). The chain crosses the membrane as a helical span at residues 466–486 (LWIAAFSYMMVWMVTIIGYTL). Residues 487-491 (GIPDV) are Extracellular-facing. A helical membrane pass occupies residues 492–512 (IMGITFLAAGTSVPDCMASLI). Residues 499–530 (AAGTSVPDCMASLIVARQGMGDMAVSNSIGSN) form an Alpha-2 repeat. The Cytoplasmic segment spans residues 513-530 (VARQGMGDMAVSNSIGSN). Residues 531–551 (VFDILIGLGLPWALQTLAVDY) form a helical membrane-spanning segment. At 552 to 561 (GSYIRLNSRG) the chain is on the extracellular side. A helical membrane pass occupies residues 562 to 582 (LIYSVGLLLASVFVTVFGVHL). Topologically, residues 583–596 (NKWQLDKKLGCGCL) are cytoplasmic. A helical membrane pass occupies residues 597–617 (FLYGVFLCFSIMTEFNVFTFV). Over 618 to 624 (NLPMCGD) the chain is Extracellular.

This sequence belongs to the Ca(2+):cation antiporter (CaCA) (TC 2.A.19) family. SLC24A subfamily. As to expression, abundant in the brain. Expressed at low levels in the aorta, uterus and intestine.

The protein localises to the cell membrane. It carries out the reaction Ca(2+)(out) + K(+)(out) + 4 Na(+)(in) = Ca(2+)(in) + K(+)(in) + 4 Na(+)(out). Calcium, potassium:sodium antiporter that transports 1 Ca(2+) and 1 K(+) in exchange for 4 Na(+). The chain is Sodium/potassium/calcium exchanger 3 (Slc24a3) from Rattus norvegicus (Rat).